The primary structure comprises 234 residues: Sugar fermentation stimulation protein homolog (234 aa).

It belongs to the SfsA family.

In Shewanella sp. (strain MR-7), this protein is Sugar fermentation stimulation protein homolog.